A 108-amino-acid chain; its full sequence is Replication initiation control protein YabA (108 aa).

Zn(2+) contacts are provided by His82, Cys84, Cys98, and Cys101.

The protein belongs to the YabA family. As to quaternary structure, homotetramer. Interacts with both DnaA and DnaN, acting as a bridge between these two proteins. Zn(2+) serves as cofactor.

The protein localises to the cytoplasm. Its subcellular location is the nucleoid. Its function is as follows. Involved in control of chromosome replication initiation. Inhibits the cooperative binding of DnaA to the oriC region, thus negatively regulating initiation of chromosome replication. Inhibits the ability of DnaA-ATP to form a helix on DNA; does not disassemble preformed DnaA-DNA helices. Decreases the residence time of DnaA on the chromosome at its binding sites (oriC, replication forks and promoter-binding sites). Tethers DnaA to the replication machinery via the DNA polymerase beta sliding clamp subunit (dnaN). Associates with oriC and other DnaA targets on the chromosome in a DnaA-dependent manner. The sequence is that of Replication initiation control protein YabA from Streptococcus agalactiae serotype Ia (strain ATCC 27591 / A909 / CDC SS700).